Reading from the N-terminus, the 311-residue chain is Ciliary microtubule inner protein 2B (311 aa).

Disordered regions lie at residues 64 to 93 (PFPPAPRGHSYNEASQELGGRRRRQRLGDP) and 150 to 183 (QEGRQPQTEHEKQLLTARHRTPLPALSKEPAPFM).

This sequence belongs to the CIMIP2 family. As to expression, expressed in airway epithelial cells.

Its subcellular location is the cytoplasm. The protein resides in the cytoskeleton. It is found in the cilium axoneme. Its function is as follows. Microtubule inner protein (MIP) part of the dynein-decorated doublet microtubules (DMTs) in cilia axoneme, which is required for motile cilia beating. In Xenopus laevis (African clawed frog), this protein is Ciliary microtubule inner protein 2B (cimip2b).